Reading from the N-terminus, the 209-residue chain is High frequency lysogenization protein HflD homolog (209 aa).

This sequence belongs to the HflD family.

It is found in the cytoplasm. The protein localises to the cell inner membrane. This Proteus mirabilis (strain HI4320) protein is High frequency lysogenization protein HflD homolog.